We begin with the raw amino-acid sequence, 114 residues long: Fumarate reductase subunit D (114 aa).

The next 3 helical transmembrane spans lie at 27 to 47 (ICFP…LIPM), 50 to 70 (IIVF…TIFP), and 94 to 114 (WLFY…VIAL).

It belongs to the FrdD family. Part of an enzyme complex containing four subunits: a flavoprotein (FrdA), an iron-sulfur protein (FrdB), and two hydrophobic anchor proteins (FrdC and FrdD).

Its subcellular location is the cell inner membrane. In terms of biological role, anchors the catalytic components of the fumarate reductase complex to the cell membrane, binds quinones. The chain is Fumarate reductase subunit D from Haemophilus ducreyi (strain 35000HP / ATCC 700724).